A 133-amino-acid chain; its full sequence is Meiotically up-regulated gene 15 protein (133 aa).

It localises to the cytoplasm. Its subcellular location is the nucleus. In terms of biological role, has a role in meiosis. This chain is Meiotically up-regulated gene 15 protein (mug15), found in Schizosaccharomyces pombe (strain 972 / ATCC 24843) (Fission yeast).